A 466-amino-acid chain; its full sequence is Soluble pyridine nucleotide transhydrogenase (466 aa).

An FAD-binding site is contributed by 36 to 45 (ERYQNVGGGC).

This sequence belongs to the class-I pyridine nucleotide-disulfide oxidoreductase family. FAD is required as a cofactor.

Its subcellular location is the cytoplasm. It catalyses the reaction NAD(+) + NADPH = NADH + NADP(+). Functionally, conversion of NADPH, generated by peripheral catabolic pathways, to NADH, which can enter the respiratory chain for energy generation. The chain is Soluble pyridine nucleotide transhydrogenase from Escherichia coli O6:K15:H31 (strain 536 / UPEC).